The chain runs to 136 residues: Ribosome-binding factor A (136 aa).

The protein belongs to the RbfA family. In terms of assembly, monomer. Binds 30S ribosomal subunits, but not 50S ribosomal subunits or 70S ribosomes.

It is found in the cytoplasm. One of several proteins that assist in the late maturation steps of the functional core of the 30S ribosomal subunit. Associates with free 30S ribosomal subunits (but not with 30S subunits that are part of 70S ribosomes or polysomes). Required for efficient processing of 16S rRNA. May interact with the 5'-terminal helix region of 16S rRNA. The sequence is that of Ribosome-binding factor A from Photorhabdus laumondii subsp. laumondii (strain DSM 15139 / CIP 105565 / TT01) (Photorhabdus luminescens subsp. laumondii).